Reading from the N-terminus, the 593-residue chain is Aspartate--tRNA ligase (593 aa).

Position 173 (glutamate 173) interacts with L-aspartate. Residues 197 to 200 form an aspartate region; that stretch reads QLFK. An L-aspartate-binding site is contributed by arginine 219. Residues 219–221 and glutamine 228 each bind ATP; that span reads RDE. Residue histidine 448 participates in L-aspartate binding. Glutamate 482 is a binding site for ATP. Residue arginine 489 participates in L-aspartate binding. 534–537 is a binding site for ATP; it reads GLDR.

Belongs to the class-II aminoacyl-tRNA synthetase family. Type 1 subfamily. In terms of assembly, homodimer.

The protein resides in the cytoplasm. The enzyme catalyses tRNA(Asp) + L-aspartate + ATP = L-aspartyl-tRNA(Asp) + AMP + diphosphate. Catalyzes the attachment of L-aspartate to tRNA(Asp) in a two-step reaction: L-aspartate is first activated by ATP to form Asp-AMP and then transferred to the acceptor end of tRNA(Asp). The protein is Aspartate--tRNA ligase of Shewanella denitrificans (strain OS217 / ATCC BAA-1090 / DSM 15013).